The chain runs to 428 residues: UDP-N-acetylglucosamine 1-carboxyvinyltransferase 2 (428 aa).

22 to 23 is a phosphoenolpyruvate binding site; sequence KN. Residue arginine 92 participates in UDP-N-acetyl-alpha-D-glucosamine binding. Cysteine 116 (proton donor) is an active-site residue. Cysteine 116 bears the 2-(S-cysteinyl)pyruvic acid O-phosphothioketal mark. UDP-N-acetyl-alpha-D-glucosamine contacts are provided by residues 121-125, aspartate 304, and isoleucine 326; that span reads RPIDQ.

It belongs to the EPSP synthase family. MurA subfamily.

The protein localises to the cytoplasm. It carries out the reaction phosphoenolpyruvate + UDP-N-acetyl-alpha-D-glucosamine = UDP-N-acetyl-3-O-(1-carboxyvinyl)-alpha-D-glucosamine + phosphate. It participates in cell wall biogenesis; peptidoglycan biosynthesis. Its function is as follows. Cell wall formation. Adds enolpyruvyl to UDP-N-acetylglucosamine. This chain is UDP-N-acetylglucosamine 1-carboxyvinyltransferase 2, found in Oceanobacillus iheyensis (strain DSM 14371 / CIP 107618 / JCM 11309 / KCTC 3954 / HTE831).